The chain runs to 125 residues: Small ribosomal subunit protein uS13 (125 aa).

The interval 97-125 (PVRGQKTRSNARTRKGPRPSRIKTKKKSS) is disordered. Over residues 101–125 (QKTRSNARTRKGPRPSRIKTKKKSS) the composition is skewed to basic residues.

It belongs to the universal ribosomal protein uS13 family. Part of the 30S ribosomal subunit. Forms a loose heterodimer with protein S19. Forms two bridges to the 50S subunit in the 70S ribosome.

Located at the top of the head of the 30S subunit, it contacts several helices of the 16S rRNA. In the 70S ribosome it contacts the 23S rRNA (bridge B1a) and protein L5 of the 50S subunit (bridge B1b), connecting the 2 subunits; these bridges are implicated in subunit movement. Contacts the tRNAs in the A and P-sites. The protein is Small ribosomal subunit protein uS13 of Thermotoga neapolitana (strain ATCC 49049 / DSM 4359 / NBRC 107923 / NS-E).